The sequence spans 660 residues: MDGLVAQCSARLLQQEKEIKSLTAEIDRLKNCSYLEASPSLEQLREENLKLKYRLNILRRSLQAERKRPTKNMININSRLQELFGCAIKAAYPDLENPPLVVTPSQQPKFGDYQCNSAMGISQMLKAKEQKVSPREIAENITKHLPNNEYIDRVEIAGPGFINVHLRKDFVSEQLTNLLVNGVQLPVLGENEKVIVDFSSPNIAKEMHVGHLRSTIIGESMSRLFEFAGYNVLRLNHVGDWGTQFGMLIAHLQDKFPDYLTVSPPIGDLQAFYKESKKRFDTEEEFKKRAYECVVLLQSKNPDIMKAWNLICDVSREEFNKIYDALDITLIERGESFYQDRMKDIVKEFEDKGFVQVDDGRKIVFVPGCSVPLTIVKSDGGYTYDTSDLAAIKQRLFEEKANKIIYVVDNGQATHFQTVFAAAQMIGWYDPKVTRVAHVGFGVVLGEDKKKFKTRSGETVRLMDLLEEGLRRSMDKLKEKERDKVLTEEELKAAQTSVAYGCIKYADLSHNRLNDYVFSFDKMLDDRGNTAAYLLYAFTRIRSIARLANIDEEMLQRAARETKIILDHEKEWKLGRCILRFPEILQKILDDLFLHTLCDYIYELATTFTEFYDSCYCVEKDRQTGKVLKVNMWRMLLCEAVAAVMAKGFDILGIKPVQRM.

Met1 is modified (N-acetylmethionine). The interval 1–72 (MDGLVAQCSA…QAERKRPTKN (72 aa)) is could be involved in the assembly of the multisynthetase complex. Residues 200-202 (SPN), His211, Tyr384, Asp388, and Gln412 each bind L-arginine. The 'HIGH' region motif lies at 201 to 212 (PNIAKEMHVGHL). The interval 529 to 543 (NTAAYLLYAFTRIRS) is interaction with tRNA.

Belongs to the class-I aminoacyl-tRNA synthetase family. In terms of assembly, interacts (via N-terminus) with AIMP1 (via N-terminus); this stimulates its catalytic activity. Interacts (via N-terminus) with LARS2 (via C-terminus). Monomer. Part of a multisubunit complex that groups tRNA ligases for Arg (RARS1), Asp (DARS1), Gln (QARS1), Ile (IARS1), Leu (LARS1), Lys (KARS1), Met (MARS1) the bifunctional ligase for Glu and Pro (EPRS1) and the auxiliary subunits AIMP1/p43, AIMP2/p38 and EEF1E1/p18. Interacts with QARS1. Part of a complex composed of RARS1, QARS1 and AIMP1. As to expression, detected in dorsal root ganglion.

The protein resides in the cytoplasm. The protein localises to the cytosol. It carries out the reaction tRNA(Arg) + L-arginine + ATP = L-arginyl-tRNA(Arg) + AMP + diphosphate. Functionally, forms part of a macromolecular complex that catalyzes the attachment of specific amino acids to cognate tRNAs during protein synthesis. Modulates the secretion of AIMP1 and may be involved in generation of the inflammatory cytokine EMAP2 from AIMP1. This chain is Arginine--tRNA ligase, cytoplasmic (Rars1), found in Rattus norvegicus (Rat).